A 640-amino-acid polypeptide reads, in one-letter code: 1,4-alpha-glucan branching enzyme GlgB (640 aa).

The Nucleophile role is filled by Asp318. The Proton donor role is filled by Glu371.

It belongs to the glycosyl hydrolase 13 family. GlgB subfamily. Monomer.

It carries out the reaction Transfers a segment of a (1-&gt;4)-alpha-D-glucan chain to a primary hydroxy group in a similar glucan chain.. The protein operates within glycan biosynthesis; glycogen biosynthesis. In terms of biological role, catalyzes the formation of the alpha-1,6-glucosidic linkages in glycogen by scission of a 1,4-alpha-linked oligosaccharide from growing alpha-1,4-glucan chains and the subsequent attachment of the oligosaccharide to the alpha-1,6 position. In Francisella philomiragia subsp. philomiragia (strain ATCC 25017 / CCUG 19701 / FSC 153 / O#319-036), this protein is 1,4-alpha-glucan branching enzyme GlgB.